A 97-amino-acid chain; its full sequence is Aspartyl/glutamyl-tRNA(Asn/Gln) amidotransferase subunit C (97 aa).

Belongs to the GatC family. Heterotrimer of A, B and C subunits.

The enzyme catalyses L-glutamyl-tRNA(Gln) + L-glutamine + ATP + H2O = L-glutaminyl-tRNA(Gln) + L-glutamate + ADP + phosphate + H(+). The catalysed reaction is L-aspartyl-tRNA(Asn) + L-glutamine + ATP + H2O = L-asparaginyl-tRNA(Asn) + L-glutamate + ADP + phosphate + 2 H(+). In terms of biological role, allows the formation of correctly charged Asn-tRNA(Asn) or Gln-tRNA(Gln) through the transamidation of misacylated Asp-tRNA(Asn) or Glu-tRNA(Gln) in organisms which lack either or both of asparaginyl-tRNA or glutaminyl-tRNA synthetases. The reaction takes place in the presence of glutamine and ATP through an activated phospho-Asp-tRNA(Asn) or phospho-Glu-tRNA(Gln). This is Aspartyl/glutamyl-tRNA(Asn/Gln) amidotransferase subunit C from Synechococcus sp. (strain CC9902).